The sequence spans 190 residues: MASRGKSETIKLRQNLEEQLDRLMQQLQDLEECREELDGDEYEETKKETLEQLSEFNDSLKKIMSGNMTLIDELGGMQLAIQAAISQAFKTPEVIRMFAKKQPGQLRTRLAELDRDLMVGKLGRDLYTQQKGEILIALQKLGEKLSPEDEAFLSENAGAVFNQFQKVSEGLGSGDKVLALASIEVENTRK.

The stretch at 3 to 63 (SRGKSETIKL…SEFNDSLKKI (61 aa)) forms a coiled coil.

The protein belongs to the CTNNBIP1 family.

This chain is Protein LZIC (lzic), found in Xenopus tropicalis (Western clawed frog).